The primary structure comprises 370 residues: Putative glutamate--cysteine ligase 2 (370 aa).

This sequence belongs to the glutamate--cysteine ligase type 2 family. YbdK subfamily.

The enzyme catalyses L-cysteine + L-glutamate + ATP = gamma-L-glutamyl-L-cysteine + ADP + phosphate + H(+). In terms of biological role, ATP-dependent carboxylate-amine ligase which exhibits weak glutamate--cysteine ligase activity. In Methylibium petroleiphilum (strain ATCC BAA-1232 / LMG 22953 / PM1), this protein is Putative glutamate--cysteine ligase 2.